A 734-amino-acid polypeptide reads, in one-letter code: Photosystem I P700 chlorophyll a apoprotein A2 (734 aa).

8 helical membrane passes run 46 to 69 (IFAS…FHVA), 135 to 158 (LYTG…LHLQ), 175 to 199 (LNHH…HVAI), 273 to 291 (IAHH…GHMY), 330 to 353 (IHFQ…QHMY), 369 to 395 (AALY…IFFI), 417 to 439 (AIKS…LYVH), and 517 to 535 (FLVH…LILV). Cys559 and Cys568 together coordinate [4Fe-4S] cluster. A run of 2 helical transmembrane segments spans residues 575–596 (AFYL…YWHW) and 643–665 (LSVW…MFLI). Chlorophyll a contacts are provided by His654, Met662, and Tyr670. Trp671 contributes to the phylloquinone binding site. The helical transmembrane segment at 707-727 (LVGLAHFSVGYIFTYAAFLIA) threads the bilayer.

This sequence belongs to the PsaA/PsaB family. The PsaA/B heterodimer binds the P700 chlorophyll special pair and subsequent electron acceptors. PSI consists of a core antenna complex that captures photons, and an electron transfer chain that converts photonic excitation into a charge separation. The eukaryotic PSI reaction center is composed of at least 11 subunits. It depends on P700 is a chlorophyll a/chlorophyll a' dimer, A0 is one or more chlorophyll a, A1 is one or both phylloquinones and FX is a shared 4Fe-4S iron-sulfur center. as a cofactor.

Its subcellular location is the plastid. It is found in the chloroplast thylakoid membrane. It carries out the reaction reduced [plastocyanin] + hnu + oxidized [2Fe-2S]-[ferredoxin] = oxidized [plastocyanin] + reduced [2Fe-2S]-[ferredoxin]. PsaA and PsaB bind P700, the primary electron donor of photosystem I (PSI), as well as the electron acceptors A0, A1 and FX. PSI is a plastocyanin-ferredoxin oxidoreductase, converting photonic excitation into a charge separation, which transfers an electron from the donor P700 chlorophyll pair to the spectroscopically characterized acceptors A0, A1, FX, FA and FB in turn. Oxidized P700 is reduced on the lumenal side of the thylakoid membrane by plastocyanin. The protein is Photosystem I P700 chlorophyll a apoprotein A2 of Drimys granadensis.